The sequence spans 577 residues: Glycine--tRNA ligase (577 aa).

Arg-98 and Glu-164 together coordinate substrate. Residues 196 to 198, 206 to 211, 328 to 329, and 451 to 454 contribute to the ATP site; these read RNE, IRLREF, EC, and GIDR. Residue 211–215 coordinates substrate; sequence FTQAE. Residue 447-451 participates in substrate binding; the sequence is EPSYG.

It belongs to the class-II aminoacyl-tRNA synthetase family.

The protein resides in the cytoplasm. The enzyme catalyses tRNA(Gly) + glycine + ATP = glycyl-tRNA(Gly) + AMP + diphosphate. Functionally, catalyzes the attachment of glycine to tRNA(Gly). In Methanocaldococcus jannaschii (strain ATCC 43067 / DSM 2661 / JAL-1 / JCM 10045 / NBRC 100440) (Methanococcus jannaschii), this protein is Glycine--tRNA ligase.